The chain runs to 39 residues: Protein MchX (39 aa).

The helical transmembrane segment at 15–37 threads the bilayer; that stretch reads SALSSTLLLSLIMSATLLEYSLS.

The protein localises to the cell inner membrane. Required for microcin H47 production. Possibly involved in a regulatory loop modulating its own expression and that of MchI and MchB. The chain is Protein MchX (mchX) from Escherichia coli.